The following is an 845-amino-acid chain: Proto-oncogene vav (845 aa).

The 119-residue stretch at 1–119 (MELWRQCTHW…YTLSALSWTP (119 aa)) folds into the Calponin-homology (CH) domain. Residues 194-373 (KRCCCLREIQ…RDLAQCVNEV (180 aa)) form the DH domain. The 103-residue stretch at 402-504 (RPKIDGELKI…WMEQFEMAIS (103 aa)) folds into the PH domain. A Phorbol-ester/DAG-type zinc finger spans residues 515 to 564 (GHDFQMFSFEETTSCKACQMLLRGTFYQGYRCYRCRAPAHKECLGRVPPC). The 69-residue stretch at 592–660 (LGLPKMEVFQ…PCNRVHPYVH (69 aa)) folds into the SH3 1 domain. The SH2 domain maps to 671–765 (WYAGPMERAG…SLDTTLQFPY (95 aa)). Residues 782–842 (KYFGTAKARY…PSNYVEEDYS (61 aa)) form the SH3 2 domain. Phosphotyrosine is present on residues Tyr-826 and Tyr-844.

Interacts with SHB. Interacts with APS, DOCK2, GRB2, GRB3, DOCK2, SLA, TEC and ZNF655/VIK. Interacts with SIAH2; without leading to its degradation. Associates with BLNK, PLCG1, GRB2 and NCK1 in a B-cell antigen receptor-dependent fashion. Interacts with CBLB; which inhibits tyrosine phosphorylation and down-regulates activity. May interact with CCPG1. Interacts with CLNK. Interacts with THEMIS2. Interacts with NEK3 and this interaction is prolactin-dependent. Interacts with ITK. Interacts with PTK2B/PYK2. Interacts with HCK. Interacts with PTK2B/PYK2. Interacts (via SH2 domain) with SYK. Interacts with ANKRD54. Interacts with CD6. Interacts with isoform 2 of CRACR2A. Interacts with LCP2; this interaction plays a role in TCR-mediated cytokine production. In terms of processing, phosphorylated by FYN. Phosphorylated on tyrosine residues by HCK in response to IFNG and bacterial lipopolysaccharide (LPS). In terms of tissue distribution, widely expressed in hematopoietic cells but not in other cell types. Found in the spleen and lung.

Functionally, couples tyrosine kinase signals with the activation of the Rho/Rac GTPases, thus leading to cell differentiation and/or proliferation. This Mus musculus (Mouse) protein is Proto-oncogene vav (Vav1).